Reading from the N-terminus, the 1007-residue chain is METGAGPHPLRLFVCLIPLCLALLLGPGRPGTAEEVILLDSKASQAELGWTALPSTGWEEISGVDEHDRPIRTYQVCNVLEPNQDNWLQTGWISRGRGQRIFVELQFTLRDCSSIPGATGTCKETFNAYYLETETDLGRGRPRLGGNRPRKIDTIAADESFTQGDLGERKMKLNTEVREIGPLSRQGFHLAFQDVGACVALVSVRVYYKQCRATVRGLAAFPATAAESAFSTLVEVAGTCVAHSEGEPSSPPRMHCGADGEWLVPVGRCSCSAGFQEHGDICEACPPGFYKVSPRRPLCSPCPEHSLALENASTFCVCQDTYARSPTDPPSASCTRPPSAPRDLQYSLSRSPLALRLRWLPPADSGGRSDVTYSLLCLRCGRDGPAGACQPCGPRVAFVPRQAGLRERAATLLHLRPGARYTVRVAALNGVSGPAAAAGATYAQVTVSTGPGAPWEEDEIRRDRVEPQSVSLSWREPVPAGAPGTNSTEYEIRYYEKGQSEQTYSTVKTGAPAVTVTNLKPATRYVFQIRAASPGPLWEAQSFSPSIEVQTPGEVAPGSRDQSPAVVVTVVTISALLVLGSVMSVLAIWRRPCDGKGSGNAHDEEELYFHFKVPTRRTFLDPQSCGDPLQAVHLFAKELDAKSVTLEKSLGAGRFGTLCCGCLQLPGRQELPVAVHTLRDGCSDSQRLSFLAEALTLGQFDHSHIVRLEGVVTRGNPLMIVTEYMNLGALDDFLRHHEGELVAAQLMGLLPGLASAMKYLSEMGYVHRGLAARRVLVSSGLLCKISGFGRGPRDRAEAVYTTMSGRSPALWAAPETLQFGHFSSASDVWSFGIVMWEVMAFGERPYWDMSGQDVIKAVEDGFRLPPPRNCPSQLHRLMLECWQKDPSERPRFSQIHSILSKMGQEPEPSKCASTTCLRPPTPLADRAFSTFPSFGSVGAWLEALDLCRYKDNFSAAGYGSLEAVAEMTAQDLGSLGISSTEHRESLLSGISALQTRVLQLQGQGVQV.

Residues 1-22 form the signal peptide; sequence METGAGPHPLRLFVCLIPLCLA. The Extracellular portion of the chain corresponds to 23-565; that stretch reads LLLGPGRPGT…APGSRDQSPA (543 aa). The Eph LBD domain maps to 35–216; it reads EVILLDSKAS…YYKQCRATVR (182 aa). The N-linked (GlcNAc...) asparagine glycan is linked to N311. Disordered regions lie at residues 323-343 and 467-486; these read ARSP…APRD and PQSV…PGTN. 2 consecutive Fibronectin type-III domains span residues 340 to 452 and 456 to 554; these read APRD…TGPG and EEDE…TPGE. N486 carries an N-linked (GlcNAc...) asparagine glycan. The chain crosses the membrane as a helical span at residues 566 to 586; that stretch reads VVVTVVTISALLVLGSVMSVL. Residues 587–1007 are Cytoplasmic-facing; that stretch reads AIWRRPCDGK…LQLQGQGVQV (421 aa). Residues 644–899 form the Protein kinase domain; it reads VTLEKSLGAG…PRFSQIHSIL (256 aa). In terms of domain architecture, SAM spans 932 to 996; it reads PSFGSVGAWL…LSGISALQTR (65 aa).

Belongs to the protein kinase superfamily. Tyr protein kinase family. Ephrin receptor subfamily. Expressed in the cochlea, in the organ of Corti, spiral ganglion, and stria vascularis.

The protein resides in the cell membrane. It catalyses the reaction L-tyrosyl-[protein] + ATP = O-phospho-L-tyrosyl-[protein] + ADP + H(+). Its function is as follows. Receptor for members of the ephrin-A family. Binds to EFNA3, EFNA4 and EFNA5. The protein is Ephrin type-A receptor 10 (Epha10) of Mus musculus (Mouse).